Here is a 908-residue protein sequence, read N- to C-terminus: NADH-quinone oxidoreductase subunit G (908 aa).

Positions 2–83 (ATIHVDGKEY…GTFISIDDEE (82 aa)) constitute a 2Fe-2S ferredoxin-type domain. Positions 34, 45, 48, and 67 each coordinate [2Fe-2S] cluster. A 4Fe-4S His(Cys)3-ligated-type domain is found at 83–122 (EAKQFRESVVEWLMTNHPHDCPVCEEGGNCHLQDMTVMTG). Residues His-99, Cys-103, Cys-106, Cys-112, Cys-151, Cys-154, Cys-157, Cys-201, Cys-228, Cys-231, Cys-235, and Cys-263 each coordinate [4Fe-4S] cluster. The 4Fe-4S Mo/W bis-MGD-type domain occupies 221–277 (MQFAPSICQQCSIGCNISPGERYGELRRIENRYNGTVNHYFLCDRGRFGYGYVNLKD).

This sequence belongs to the complex I 75 kDa subunit family. In terms of assembly, composed of 13 different subunits. Subunits NuoCD, E, F, and G constitute the peripheral sector of the complex. It depends on [2Fe-2S] cluster as a cofactor. The cofactor is [4Fe-4S] cluster.

The catalysed reaction is a quinone + NADH + 5 H(+)(in) = a quinol + NAD(+) + 4 H(+)(out). Its function is as follows. NDH-1 shuttles electrons from NADH, via FMN and iron-sulfur (Fe-S) centers, to quinones in the respiratory chain. The immediate electron acceptor for the enzyme in this species is believed to be ubiquinone. Couples the redox reaction to proton translocation (for every two electrons transferred, four hydrogen ions are translocated across the cytoplasmic membrane), and thus conserves the redox energy in a proton gradient. This chain is NADH-quinone oxidoreductase subunit G (nuoG), found in Salmonella typhi.